An 806-amino-acid polypeptide reads, in one-letter code: Enhancer of polycomb-like protein 1 (806 aa).

Disordered regions lie at residues 403–461 (AITS…QEIG) and 751–806 (SLQQ…NAAA). The span at 411 to 420 (KRAKSSKSSK) shows a compositional bias: basic residues. Basic and acidic residues predominate over residues 421–439 (LHKEDSGLYADEKGSEPKK). The segment covering 751–779 (SLQQQQMLQKGQQPINNAPHSQSSSPPSH) has biased composition (low complexity). The span at 785–795 (NPGSTPNQSSP) shows a compositional bias: polar residues.

It belongs to the enhancer of polycomb family. Component of the NuA4 histone acetyltransferase complex.

It localises to the nucleus. In terms of biological role, component of the NuA4 histone acetyltransferase complex which is involved in transcriptional activation of selected genes principally by acetylation of nucleosomal histone H4 and H2A. The NuA4 complex is also involved in DNA repair. Involved in gene silencing by neighboring heterochromatin, blockage of the silencing spreading along the chromosome, and required for cell cycle progression through G2/M. This chain is Enhancer of polycomb-like protein 1 (EPL1), found in Kluyveromyces lactis (strain ATCC 8585 / CBS 2359 / DSM 70799 / NBRC 1267 / NRRL Y-1140 / WM37) (Yeast).